Consider the following 2643-residue polypeptide: BAH and coiled-coil domain-containing protein 1 (2643 aa).

2 disordered regions span residues S23 to P45 and S84 to H106. Residue K220 is modified to N6-acetyllysine. Basic and acidic residues-rich tracts occupy residues K224–K249 and E683–V702. Disordered stretches follow at residues K224–G273, P674–Q704, G721–E758, R985–A1023, and T1038–P1299. Positions R985–P1003 are enriched in basic and acidic residues. Residues R1133–S1149 are compositionally biased toward pro residues. The segment covering A1210–E1224 has biased composition (polar residues). Acidic residues predominate over residues Q1269 to V1284. 2 coiled-coil regions span residues A1346 to A1373 and L1437 to S1486. Over residues Q1466 to S1484 the composition is skewed to basic and acidic residues. Disordered regions lie at residues Q1466–K1520, G1537–S1559, K1604–M1641, R1746–T1781, F1875–L1896, S2055–G2124, C2322–P2341, and S2349–E2386. Basic residues predominate over residues P1487 to S1501. Basic and acidic residues predominate over residues P1631 to M1641. A compositionally biased stretch (basic residues) spans G1757–T1767. Over residues F1875–A1892 the composition is skewed to acidic residues. Positions S2349–S2374 are enriched in low complexity. The segment covering D2375 to E2386 has biased composition (acidic residues). In terms of domain architecture, BAH spans E2517–D2637.

In Mus musculus (Mouse), this protein is BAH and coiled-coil domain-containing protein 1 (Bahcc1).